A 240-amino-acid polypeptide reads, in one-letter code: Enoyl-CoA delta isomerase 2, peroxisomal (240 aa).

The short motif at 238–240 is the Microbody targeting signal element; that stretch reads PKL.

This sequence belongs to the enoyl-CoA hydratase/isomerase family.

Its subcellular location is the peroxisome. The enzyme catalyses a (3Z)-enoyl-CoA = a 4-saturated (2E)-enoyl-CoA. It catalyses the reaction a (3E)-enoyl-CoA = a 4-saturated (2E)-enoyl-CoA. The protein operates within lipid metabolism; fatty acid beta-oxidation. Functionally, able to isomerize both 3-cis and 3-trans double bonds into the 2-trans form in a range of enoyl-CoA species. Essential for the beta oxidation of unsaturated fatty acids. Involved with IBR1 and IBR3 in the peroxisomal beta-oxidation of indole-3-butyric acid (IBA) to form indole-3-acetic acid (IAA), a biologically active auxin. The sequence is that of Enoyl-CoA delta isomerase 2, peroxisomal from Arabidopsis thaliana (Mouse-ear cress).